A 975-amino-acid chain; its full sequence is Ubiquitin C-terminal hydrolase 15 (975 aa).

Zn(2+)-binding residues include Cys-88, Cys-91, Cys-99, Cys-102, Cys-108, Cys-112, His-121, and Cys-125. Residues 88–125 form an MYND-type zinc finger; sequence CATCHGPAKTRCSRCKSVRYCSGKCQIIHWRQGHKQTC. The segment at 301-378 is disordered; the sequence is EGPYASAAES…STKTAVSTNS (78 aa). Residues 309-322 are compositionally biased toward polar residues; it reads ESLQRSNSSGNVTG. Positions 354-369 are enriched in basic and acidic residues; that stretch reads YDGHEKNPHNKNEQRS. One can recognise a USP domain in the interval 441–747; sequence RGLFNCGNSC…GAYMLFYMRS (307 aa). The active-site Nucleophile is the Cys-450. Residue His-706 is the Proton acceptor of the active site. Positions 764–783 are disordered; the sequence is PTCSKRHSSKSSKGSKQDLN.

This sequence belongs to the peptidase C19 family. As to expression, highly expressed in young panicles. Expressed in roots, leaf blades, leaf sheaths and stems. Expressed at low levels in brown grains.

Its subcellular location is the cytoplasm. The protein resides in the nucleus. The catalysed reaction is Thiol-dependent hydrolysis of ester, thioester, amide, peptide and isopeptide bonds formed by the C-terminal Gly of ubiquitin (a 76-residue protein attached to proteins as an intracellular targeting signal).. Its function is as follows. Recognizes and hydrolyzes the peptide bond at the C-terminal Gly of ubiquitin. Involved in the processing of poly-ubiquitin precursors as well as that of ubiquitinated proteins. Involved in the regulation of grain size. Acts as positive regulator of grain width and size by influencing cell proliferation. Functions partially antagonistically with GW2 in the regulation of grain width. Possesses deubiquitinating enzyme activity in vitro. This chain is Ubiquitin C-terminal hydrolase 15, found in Oryza sativa subsp. japonica (Rice).